We begin with the raw amino-acid sequence, 445 residues long: ATP-dependent protease ATPase subunit HslU (445 aa).

ATP is bound by residues isoleucine 17, 59–64 (GVGKTE), aspartate 254, glutamate 319, and arginine 391.

Belongs to the ClpX chaperone family. HslU subfamily. In terms of assembly, a double ring-shaped homohexamer of HslV is capped on each side by a ring-shaped HslU homohexamer. The assembly of the HslU/HslV complex is dependent on binding of ATP.

The protein resides in the cytoplasm. ATPase subunit of a proteasome-like degradation complex; this subunit has chaperone activity. The binding of ATP and its subsequent hydrolysis by HslU are essential for unfolding of protein substrates subsequently hydrolyzed by HslV. HslU recognizes the N-terminal part of its protein substrates and unfolds these before they are guided to HslV for hydrolysis. The sequence is that of ATP-dependent protease ATPase subunit HslU from Pseudomonas savastanoi pv. phaseolicola (strain 1448A / Race 6) (Pseudomonas syringae pv. phaseolicola (strain 1448A / Race 6)).